Reading from the N-terminus, the 179-residue chain is Large ribosomal subunit protein uL5 (179 aa).

It belongs to the universal ribosomal protein uL5 family. In terms of assembly, part of the 50S ribosomal subunit; part of the 5S rRNA/L5/L18/L25 subcomplex. Contacts the 5S rRNA and the P site tRNA. Forms a bridge to the 30S subunit in the 70S ribosome.

This is one of the proteins that bind and probably mediate the attachment of the 5S RNA into the large ribosomal subunit, where it forms part of the central protuberance. In the 70S ribosome it contacts protein S13 of the 30S subunit (bridge B1b), connecting the 2 subunits; this bridge is implicated in subunit movement. Contacts the P site tRNA; the 5S rRNA and some of its associated proteins might help stabilize positioning of ribosome-bound tRNAs. The polypeptide is Large ribosomal subunit protein uL5 (Pseudomonas fluorescens (strain SBW25)).